Consider the following 245-residue polypeptide: 1-(5-phosphoribosyl)-5-[(5-phosphoribosylamino)methylideneamino] imidazole-4-carboxamide isomerase (245 aa).

Residue Asp7 is the Proton acceptor of the active site. The Proton donor role is filled by Asp129.

This sequence belongs to the HisA/HisF family.

The protein resides in the cytoplasm. It catalyses the reaction 1-(5-phospho-beta-D-ribosyl)-5-[(5-phospho-beta-D-ribosylamino)methylideneamino]imidazole-4-carboxamide = 5-[(5-phospho-1-deoxy-D-ribulos-1-ylimino)methylamino]-1-(5-phospho-beta-D-ribosyl)imidazole-4-carboxamide. It functions in the pathway amino-acid biosynthesis; L-histidine biosynthesis; L-histidine from 5-phospho-alpha-D-ribose 1-diphosphate: step 4/9. The sequence is that of 1-(5-phosphoribosyl)-5-[(5-phosphoribosylamino)methylideneamino] imidazole-4-carboxamide isomerase from Psychromonas ingrahamii (strain DSM 17664 / CCUG 51855 / 37).